Consider the following 72-residue polypeptide: Hirudin variant-2 (72 aa).

The first 7 residues, 1 to 7, serve as a signal peptide directing secretion; that stretch reads AICVSQA. Residues 8 to 10 are interaction with thrombin active site; the sequence is ITY. 3 disulfide bridges follow: C13–C21, C23–C35, and C29–C46. The interval 47–72 is disordered; that stretch reads VTGEGTPNPESHNNGDFEEIPEEYLQ. Residue T52 is glycosylated (O-linked (GalNAc...) threonine). An interaction with fibrinogen-binding exosite of thrombin region spans residues 62-72; sequence DFEEIPEEYLQ. Over residues 62–72 the composition is skewed to acidic residues; that stretch reads DFEEIPEEYLQ. Position 70 is a sulfotyrosine (Y70).

It belongs to the protease inhibitor I14 (hirudin) family.

It is found in the secreted. Hirudin is a potent thrombin-specific protease inhibitor. It forms a stable non-covalent complex with alpha-thrombin, thereby abolishing its ability to cleave fibrinogen. The chain is Hirudin variant-2 from Hirudo medicinalis (Medicinal leech).